A 278-amino-acid chain; its full sequence is Putative transposase for insertion sequence element IS986/IS6110 (278 aa).

Residues 101–268 enclose the Integrase catalytic domain; sequence GPPAPNRLWV…VPPVELEAAY (168 aa).

In terms of biological role, involved in the transposition of the insertion sequence. This is Putative transposase for insertion sequence element IS986/IS6110 from Mycobacterium bovis (strain ATCC BAA-935 / AF2122/97).